The chain runs to 98 residues: Hainantoxin-XVII.3 (98 aa).

Residues 1-40 form the signal peptide; it reads MTTVGVSLFRRSPEKITMKIATFLGLSFLLIASYFLICEA. The propeptide occupies 41 to 64; the sequence is QHPGFQELLILEENMRDPENSKER. 3 cysteine pairs are disulfide-bonded: cysteine 66/cysteine 81, cysteine 73/cysteine 85, and cysteine 80/cysteine 95.

This sequence belongs to the hainantoxin family. 17 subfamily. In terms of tissue distribution, expressed by the venom gland.

It localises to the secreted. In terms of biological role, inhibits with low potency Kv1.2/KCNA2 and Kv1.3/KCNA3 voltage-gated potassium channels. This chain is Hainantoxin-XVII.3, found in Cyriopagopus hainanus (Chinese bird spider).